We begin with the raw amino-acid sequence, 351 residues long: 3-ketosteroid-9-alpha-monooxygenase, ferredoxin reductase component (351 aa).

The FAD-binding FR-type domain maps to 10 to 116 (SRSVILTVSA…LPPAGVFTPK (107 aa)). The 88-residue stretch at 264–351 (ATVEVELDGE…PVTDHLKIEF (88 aa)) folds into the 2Fe-2S ferredoxin-type domain. [2Fe-2S] cluster contacts are provided by Cys-300, Cys-305, Cys-308, and Cys-338.

In terms of assembly, the two-component system 3-ketosteroid-9-alpha-monooxygenase is composed of an oxygenase component KshA and a reductase component KshB. Requires FAD as cofactor. It depends on [2Fe-2S] cluster as a cofactor.

It catalyses the reaction androsta-1,4-diene-3,17-dione + 2 reduced [2Fe-2S]-[ferredoxin] + O2 + 2 H(+) = 9alpha-hydroxyandrosta-1,4-diene-3,17-dione + 2 oxidized [2Fe-2S]-[ferredoxin] + H2O. Its pathway is steroid metabolism; cholesterol degradation. With respect to regulation, KSH activity is completely inhibited by zinc ions. KshB is specifically inhibited by Cu(2+) ions. Probably involved in the degradation of cholesterol. In vitro, catalyzes the introduction of a 9alpha-hydroxyl moiety into the ring B of 3-ketosteroid substrates such as 1,4-androstadiene-3,17-dione (ADD), 4-androstene-3,17-dione (AD), 4-androstene-17beta-ol-3-one (testosterone), 4-pregnene-3,20-dione (progesterone), 19-nor-4-androstene-3,17-dione (nordion), 1-(5alpha)-androstene-3,17-dione, 5alpha-androstane-3,17-dione and 5beta-androstane-3,17-dione. KSH has the highest activity with 3-keto-Delta4 steroid substrates. This is 3-ketosteroid-9-alpha-monooxygenase, ferredoxin reductase component from Rhodococcus rhodochrous.